Reading from the N-terminus, the 167-residue chain is Peptide deformylase (167 aa).

Fe cation is bound by residues Cys-91 and His-133. Glu-134 is an active-site residue. His-137 contacts Fe cation.

It belongs to the polypeptide deformylase family. Requires Fe(2+) as cofactor.

The catalysed reaction is N-terminal N-formyl-L-methionyl-[peptide] + H2O = N-terminal L-methionyl-[peptide] + formate. Its function is as follows. Removes the formyl group from the N-terminal Met of newly synthesized proteins. Requires at least a dipeptide for an efficient rate of reaction. N-terminal L-methionine is a prerequisite for activity but the enzyme has broad specificity at other positions. This chain is Peptide deformylase, found in Neisseria meningitidis serogroup C (strain 053442).